The primary structure comprises 348 residues: Lysophosphatidic acid receptor 2 (348 aa).

The Extracellular portion of the chain corresponds to 1–30 (MGQCYYNETIGFFYNNSGKELSSHWRPKDV). N-linked (GlcNAc...) asparagine glycans are attached at residues asparagine 7 and asparagine 15. A helical transmembrane segment spans residues 31–51 (VVVALGLTVSVLVLLTNLLVI). Topologically, residues 52-66 (AAIASNRRFHQPIYY) are cytoplasmic. Residues 67 to 87 (LLGNLAAADLFAGVAYLFLMF) traverse the membrane as a helical segment. The Extracellular segment spans residues 88–100 (HTGPRTARLSLEG). Residues 101–123 (WFLRQGLLDTSLTASVATLLAIA) form a helical membrane-spanning segment. Over 124–143 (VERHRSVMAVQLHSRLPRGR) the chain is Cytoplasmic. Residues 144–164 (VVMLIVGVWVAALGLGLLPAH) traverse the membrane as a helical segment. Over 165 to 185 (SWHCLCALDRCSRMAPLLSRS) the chain is Extracellular. A helical membrane pass occupies residues 186–206 (YLAVWALSSLLVFLLMVAVYT). Residues 207–239 (RIFFYVRRRVQRMAEHVSCHPRYRETTLSLVKT) lie on the Cytoplasmic side of the membrane. A helical membrane pass occupies residues 240–260 (VVIILGAFVVCWTPGQVVLLL). Residues 261–276 (DGLGCESCNVLAVEKY) are Extracellular-facing. The helical transmembrane segment at 277 to 294 (FLLLAEANSLVNAAVYSC) threads the bilayer. Residues 295–348 (RDAEMRRTFRRLLCCACLRQSTRESVHYTSSAQGGASTRIMLPENGHPLMDSTL) are Cytoplasmic-facing. Residue cysteine 308 is the site of S-palmitoyl cysteine attachment. The PDZ-binding signature appears at 345-348 (DSTL).

It belongs to the G-protein coupled receptor 1 family. As to quaternary structure, interacts with SLC9A3R2/NHERF2, MAGI3 and PLCB3. Interacts with RALA and GRK2. As to expression, expressed most abundantly in testes and peripheral blood leukocytes with less expression in pancreas, spleen, thymus and prostate. Little or no expression in heart, brain, placenta, lung, liver, skeletal muscle, kidney, ovary, small intestine, or colon.

Its subcellular location is the cell surface. It localises to the cell membrane. Functionally, receptor for lysophosphatidic acid (LPA), a mediator of diverse cellular activities. Seems to be coupled to the G(i)/G(o), G(12)/G(13), and G(q) families of heteromeric G proteins. Plays a key role in phospholipase C-beta (PLC-beta) signaling pathway. Stimulates phospholipase C (PLC) activity in a manner that is independent of RALA activation. In Homo sapiens (Human), this protein is Lysophosphatidic acid receptor 2.